Consider the following 94-residue polypeptide: Small ribosomal subunit protein uS19 (94 aa).

It belongs to the universal ribosomal protein uS19 family.

Protein S19 forms a complex with S13 that binds strongly to the 16S ribosomal RNA. In Pelotomaculum thermopropionicum (strain DSM 13744 / JCM 10971 / SI), this protein is Small ribosomal subunit protein uS19.